The following is a 291-amino-acid chain: N-acetylmannosamine kinase (291 aa).

Residues 5–12 and 132–139 each bind ATP; these read AIDIGGTK and GVGGGVVS. Positions 156, 166, 168, and 173 each coordinate Zn(2+).

The protein belongs to the ROK (NagC/XylR) family. NanK subfamily. As to quaternary structure, homodimer.

It catalyses the reaction an N-acyl-D-mannosamine + ATP = an N-acyl-D-mannosamine 6-phosphate + ADP + H(+). The protein operates within amino-sugar metabolism; N-acetylneuraminate degradation; D-fructose 6-phosphate from N-acetylneuraminate: step 2/5. Functionally, catalyzes the phosphorylation of N-acetylmannosamine (ManNAc) to ManNAc-6-P. This Escherichia coli O6:K15:H31 (strain 536 / UPEC) protein is N-acetylmannosamine kinase.